A 409-amino-acid chain; its full sequence is Peptidase T (409 aa).

His80 is a binding site for Zn(2+). The active site involves Asp82. Residue Asp143 participates in Zn(2+) binding. The Proton acceptor role is filled by Glu177. Zn(2+) contacts are provided by Glu178, Asp200, and His382.

The protein belongs to the peptidase M20B family. Zn(2+) serves as cofactor.

It is found in the cytoplasm. It carries out the reaction Release of the N-terminal residue from a tripeptide.. Cleaves the N-terminal amino acid of tripeptides. This chain is Peptidase T, found in Alkaliphilus oremlandii (strain OhILAs) (Clostridium oremlandii (strain OhILAs)).